The chain runs to 1203 residues: MAGHLVKYGKHRTRRSYSRIKEVLDLPNLIEIQTNSYNWFLDEGLRDMFDDIMPIEDFQGNLSLEFVDYQLLEPKYSVDEAREHDANYSAPLHVTLRLTNHETGEIKSQDVFFGDFPLMTAQGTFIINGAERVIVSQLVRSPGVYFNEDTDKNGRTVYGATVIPNRGAWLEFETDAKNVSYVRIDRTRKIPMTELVRALGFGSDDEILDILGDNESLMQTLEKDIHKNTDDSRVEESLKDIYERLRPGEPKTADSSRSLLTARFFDPKRYDMAPVGRYKTNKKLSLKTRLLGLTLAETLADPDTGEIIAAKGTVVDKDVMKSLAPFLDQDDFKMVTFQPSDEAVVTEPLKLQIIKVQSPDDPEQEVPVIGNGNIDIKLKHIRPADIIASMNYFFDLQLGIGNTDDIDHLGNRRIRSVGELLQNQFRIGLSRMERVVRERMSIQDAATVTPQQLINIRPVVASIKEFFGSSQLSQFMDQTNPLGELTHKRRLSALGPGGLTRDRAGYEVRDVHYTHYGRMCPIETPEGPNIGLINSLSSYARVNKYGFIETPYRRVSWDTHKVTDKIDYLTADEEDNYVVAQANTPLNDDGSFNTDTIMARAQSENIETSADRIDYMDVSPKQVVAVATACIPFLENDDSNRALMGANMQRQAVPLLNPHAPLIGTGIEYKAAHDSGVALISQHDGTVEYVDAREIRVRREDGALDTYKLMKFRRSNGGKNYNQRPIVKVGDHVDNDEVLADGPSMENGELALGQNPLVAFMTWQGYNFEDAIGINERLVRDDVYTSIHIEEYESEARDTKLGPEEMTREIPNVGEDALKNLDEDGIIRVGAEVQDGDILVGKVTPKGVTELSAEERLLHAIFGEKAREVRDTSLKVPHGGGGIIQDVKIFTRENGDELSPGVNMMVRVYIAQKRKIQVGDKMSGRHGNKGTVSVVIPEEDMPYMPDGTPIDIMLSPMGVPSRMNIGQVLELHLGMAARKLGVHMATPVFDGAQDTDIADAVKEAGMAADAKTVLYDGRTGEPFDKRVAVGVMHYLKLAHMVDDKMHARSIGPYSLVTQQPLGGKAQFGGQRFGEMEVWALEAYGAAYTLQEILTYKSDDVVGRVKTYEAIVKGDPIPKPGVPESFRVLVKELQSLGLDMKVLNGDKEEIELRDMDDEDDDVVNVDALSKYAQQQEEQRKAAAQTDESKTAPATKNESQPNTQD.

A disordered region spans residues 1167 to 1203 (LSKYAQQQEEQRKAAAQTDESKTAPATKNESQPNTQD). Over residues 1190–1203 (APATKNESQPNTQD) the composition is skewed to polar residues.

This sequence belongs to the RNA polymerase beta chain family. As to quaternary structure, the RNAP catalytic core consists of 2 alpha, 1 beta, 1 beta' and 1 omega subunit. When a sigma factor is associated with the core the holoenzyme is formed, which can initiate transcription.

The catalysed reaction is RNA(n) + a ribonucleoside 5'-triphosphate = RNA(n+1) + diphosphate. In terms of biological role, DNA-dependent RNA polymerase catalyzes the transcription of DNA into RNA using the four ribonucleoside triphosphates as substrates. This Levilactobacillus brevis (strain ATCC 367 / BCRC 12310 / CIP 105137 / JCM 1170 / LMG 11437 / NCIMB 947 / NCTC 947) (Lactobacillus brevis) protein is DNA-directed RNA polymerase subunit beta.